A 226-amino-acid polypeptide reads, in one-letter code: Ribose-5-phosphate isomerase A (226 aa).

Substrate-binding positions include 26–29 (TGST), 82–85 (DGAD), and 95–98 (KGGG). Glu-104 serves as the catalytic Proton acceptor. Lys-122 contributes to the substrate binding site.

The protein belongs to the ribose 5-phosphate isomerase family. In terms of assembly, homodimer.

It carries out the reaction aldehydo-D-ribose 5-phosphate = D-ribulose 5-phosphate. Its pathway is carbohydrate degradation; pentose phosphate pathway; D-ribose 5-phosphate from D-ribulose 5-phosphate (non-oxidative stage): step 1/1. Its function is as follows. Catalyzes the reversible conversion of ribose-5-phosphate to ribulose 5-phosphate. In Streptococcus thermophilus (strain ATCC BAA-250 / LMG 18311), this protein is Ribose-5-phosphate isomerase A.